A 270-amino-acid polypeptide reads, in one-letter code: MKMTSKKMKDELIKKLSRPEWDFQYDSEKEVLRIEQKDSKKGINVSLPGVVAKWEVNKEKAIEEVAYYVQEALIAMHKEENSGAKILPVIRSTSFPKQAEEGNPFIMTDHTAETRIYYALDSNKTYRLIDERLLQKLELTEQQVREMALFNARSLGYEFKQDTVAGNTFYFLNTNDGYDATRILNESLLQSMREKISGDMVVAVPHQDVLIIADIVNEIGYDIIAQMTMKFFAEGHVPITSLSFVYEDGEFEPIFILAKNRKKTDGKEKG.

Belongs to the UPF0354 family.

This is UPF0354 protein BC_4690 from Bacillus cereus (strain ATCC 14579 / DSM 31 / CCUG 7414 / JCM 2152 / NBRC 15305 / NCIMB 9373 / NCTC 2599 / NRRL B-3711).